The primary structure comprises 730 residues: Hemolytic phospholipase C (730 aa).

Residues 1–38 (MTENWKFRRRTFLKHGAQAATLAGLSGLFPETLRRALA) constitute a signal peptide (tat-type signal).

The protein belongs to the bacterial phospholipase C family. In terms of processing, predicted to be exported by the Tat system. The position of the signal peptide cleavage has not been experimentally proven.

It carries out the reaction a 1,2-diacyl-sn-glycero-3-phosphocholine + H2O = phosphocholine + a 1,2-diacyl-sn-glycerol + H(+). Functionally, hydrolyzes sphingomyelin in addition to phosphatidylcholine. The protein is Hemolytic phospholipase C (plcH) of Pseudomonas aeruginosa (strain ATCC 15692 / DSM 22644 / CIP 104116 / JCM 14847 / LMG 12228 / 1C / PRS 101 / PAO1).